The following is a 376-amino-acid chain: Putative transmembrane protein 183BP (376 aa).

2 disordered regions span residues 1 to 20 (MARG…AMPK) and 102 to 127 (AQEE…ELDG). The helical transmembrane segment at 300 to 320 (LNFIFIPIVMGMIFTLFTINV) threads the bilayer.

This sequence belongs to the TMEM183 family. Expressed in brain, lung, pancreas, thymus, intestine and blood. Not detected in heart, placenta, liver, muscle, kidney, spleen, prostate, testis, ovary and colon.

The protein localises to the membrane. The sequence is that of Putative transmembrane protein 183BP from Homo sapiens (Human).